Here is a 447-residue protein sequence, read N- to C-terminus: Na(+)-translocating NADH-quinone reductase subunit A (447 aa).

The protein belongs to the NqrA family. Composed of six subunits; NqrA, NqrB, NqrC, NqrD, NqrE and NqrF.

The catalysed reaction is a ubiquinone + n Na(+)(in) + NADH + H(+) = a ubiquinol + n Na(+)(out) + NAD(+). In terms of biological role, NQR complex catalyzes the reduction of ubiquinone-1 to ubiquinol by two successive reactions, coupled with the transport of Na(+) ions from the cytoplasm to the periplasm. NqrA to NqrE are probably involved in the second step, the conversion of ubisemiquinone to ubiquinol. The chain is Na(+)-translocating NADH-quinone reductase subunit A from Neisseria gonorrhoeae (strain NCCP11945).